The sequence spans 658 residues: Putative arrestin-related trafficking adapter C2D10.04 (658 aa).

Disordered regions lie at residues 21–107 and 638–658; these read LHHQ…LTWS and REEA…EIPR. Low complexity predominate over residues 39–81; sequence NRSSNSGLNRRNSVFGLPSSGLSSRLSKPSLSSINNSNNSSSN. Residues 96–107 are compositionally biased toward polar residues; the sequence is RNMSNKPPLTWS. The residue at position 653 (Ser653) is a Phosphoserine.

It belongs to the ALY1 family.

The protein resides in the cytoplasm. In terms of biological role, may regulate endocytosis in response to extracellular stimuli. This chain is Putative arrestin-related trafficking adapter C2D10.04, found in Schizosaccharomyces pombe (strain 972 / ATCC 24843) (Fission yeast).